We begin with the raw amino-acid sequence, 197 residues long: Thymidylate kinase (197 aa).

An ATP-binding site is contributed by 7–14; that stretch reads GIDGCGKS.

The protein belongs to the thymidylate kinase family.

It carries out the reaction dTMP + ATP = dTDP + ADP. Its function is as follows. Phosphorylation of dTMP to form dTDP in both de novo and salvage pathways of dTTP synthesis. This Fervidobacterium nodosum (strain ATCC 35602 / DSM 5306 / Rt17-B1) protein is Thymidylate kinase.